A 72-amino-acid chain; its full sequence is MSKVTTVFIGALVLLLLIENGFSCTNPGKKRCNAKCSTHCDCKDGPTHNFGAGPVQCKKCTYQFKGEAYCKQ.

Positions 1–22 (MSKVTTVFIGALVLLLLIENGF) are cleaved as a signal peptide. 4 cysteine pairs are disulfide-bonded: cysteine 24–cysteine 40, cysteine 32–cysteine 57, cysteine 36–cysteine 60, and cysteine 42–cysteine 70.

Expressed in salivary glands.

Its subcellular location is the secreted. In terms of biological role, probable neurotoxin. This Ixodes holocyclus (Australian paralysis tick) protein is Holocyclotoxin-1.